The primary structure comprises 99 residues: Large ribosomal subunit protein bL21 (99 aa).

It belongs to the bacterial ribosomal protein bL21 family. Part of the 50S ribosomal subunit. Contacts protein L20.

Its function is as follows. This protein binds to 23S rRNA in the presence of protein L20. This is Large ribosomal subunit protein bL21 from Mesomycoplasma hyopneumoniae (strain 232) (Mycoplasma hyopneumoniae).